Reading from the N-terminus, the 905-residue chain is Coatomer subunit beta' (905 aa).

WD repeat units lie at residues 13 to 52 (ARSD…LVKT), 55 to 94 (VCDL…RVHM), 97 to 136 (AHSD…SCSQ), 140 to 180 (GHTH…PNFT), 183 to 224 (GHEK…CVQT), 227 to 266 (GHAQ…LEST), 350 to 388 (SCEI…NKSF), and 390 to 425 (SAQE…KSFK). Lysine 627 is modified (N6-acetyllysine). A WD 9 repeat occupies 746–783 (IRTGRLPEAAFLARTYLPSQVSRVVKLWRENLSKVNQK). The interval 837 to 873 (EEAKGFQPSRPTAQQEPDGKPASSPVIMASQTTHKEE) is disordered. Serine 859 bears the Phosphoserine mark. The stretch at 867-891 (QTTHKEEKSLLELEVDLDNLELEDI) forms a coiled coil.

This sequence belongs to the WD repeat COPB2 family. Oligomeric complex that consists of at least the alpha, beta, beta', gamma, delta, epsilon and zeta subunits. Probably interacts with PEX11A. Interacts with SCYL1. Interacts with JAGN1.

It localises to the cytoplasm. Its subcellular location is the cytosol. The protein localises to the golgi apparatus membrane. The protein resides in the cytoplasmic vesicle. It is found in the COPI-coated vesicle membrane. Its function is as follows. The coatomer is a cytosolic protein complex that binds to dilysine motifs and reversibly associates with Golgi non-clathrin-coated vesicles, which further mediate biosynthetic protein transport from the ER, via the Golgi up to the trans Golgi network. Coatomer complex is required for budding from Golgi membranes, and is essential for the retrograde Golgi-to-ER transport of dilysine-tagged proteins. In mammals, the coatomer can only be recruited by membranes associated to ADP-ribosylation factors (ARFs), which are small GTP-binding proteins; the complex also influences the Golgi structural integrity, as well as the processing, activity, and endocytic recycling of LDL receptors. Functionally, this coatomer complex protein, essential for Golgi budding and vesicular trafficking, is a selective binding protein (RACK) for protein kinase C, epsilon type. It binds to Golgi membranes in a GTP-dependent manner. This is Coatomer subunit beta' (Copb2) from Mus musculus (Mouse).